We begin with the raw amino-acid sequence, 462 residues long: Argininosuccinate lyase (462 aa).

The protein belongs to the lyase 1 family. Argininosuccinate lyase subfamily.

It is found in the cytoplasm. The enzyme catalyses 2-(N(omega)-L-arginino)succinate = fumarate + L-arginine. The protein operates within amino-acid biosynthesis; L-arginine biosynthesis; L-arginine from L-ornithine and carbamoyl phosphate: step 3/3. This chain is Argininosuccinate lyase, found in Ehrlichia ruminantium (strain Welgevonden).